We begin with the raw amino-acid sequence, 381 residues long: Alkanesulfonate monooxygenase (381 aa).

Belongs to the SsuD family. In terms of assembly, homotetramer.

It catalyses the reaction an alkanesulfonate + FMNH2 + O2 = an aldehyde + FMN + sulfite + H2O + 2 H(+). Its function is as follows. Catalyzes the desulfonation of aliphatic sulfonates. The polypeptide is Alkanesulfonate monooxygenase (Enterobacter sp. (strain 638)).